The chain runs to 433 residues: Peptidoglycan DD-endopeptidase ShyC (433 aa).

Residues 10 to 30 (WLHRVLITAFSAIIVFAIFFL) traverse the membrane as a helical segment. Zn(2+)-binding residues include His299, Asp303, and His380.

This sequence belongs to the peptidase M23B family. Zn(2+) serves as cofactor.

Its subcellular location is the cell inner membrane. It functions in the pathway cell wall degradation; peptidoglycan degradation. With respect to regulation, reduced activity in 0.5 mM EDTA and a complete loss of activity at higher EDTA concentrations. Functionally, cell wall peptidoglycan (PG) DD-endopeptidase. Hydrolyzes peptide cross-links which covalently connect adjacent PG strands probably to allow insertion of new glycans and thus cell wall expansion. Degrades purified whole PG sacculi in vitro. The sequence is that of Peptidoglycan DD-endopeptidase ShyC from Vibrio cholerae serotype O1 (strain ATCC 39315 / El Tor Inaba N16961).